The primary structure comprises 700 residues: Polyribonucleotide nucleotidyltransferase (700 aa).

Positions 491 and 497 each coordinate Mg(2+). Positions 558-617 constitute a KH domain; that stretch reads PNYAVIEINPDKIRDVIGKGGATIRQLTEETGAVIDIDDAGTIRIFGENKAATKAAIAKI. The 69-residue stretch at 627–695 folds into the S1 motif domain; that stretch reads GKTYEGTVAR…NRGRIKLTMK (69 aa).

Belongs to the polyribonucleotide nucleotidyltransferase family. Component of the RNA degradosome, which is a multiprotein complex involved in RNA processing and mRNA degradation. It depends on Mg(2+) as a cofactor.

The protein localises to the cytoplasm. It carries out the reaction RNA(n+1) + phosphate = RNA(n) + a ribonucleoside 5'-diphosphate. Its function is as follows. Involved in mRNA degradation. Catalyzes the phosphorolysis of single-stranded polyribonucleotides processively in the 3'- to 5'-direction. The polypeptide is Polyribonucleotide nucleotidyltransferase (Psychrobacter cryohalolentis (strain ATCC BAA-1226 / DSM 17306 / VKM B-2378 / K5)).